We begin with the raw amino-acid sequence, 843 residues long: Protein P (843 aa).

The terminal protein domain (TP) stretch occupies residues 1–177 (MPLSYQHFRK…FCGSPYSWEQ (177 aa)). Residues 178–346 (DLQHGRLVIQ…YCLCHIVNLI (169 aa)) are spacer. 2 disordered regions span residues 219–258 (RKSR…VGVE) and 297–316 (SSGH…RSQS). The polymerase/reverse transcriptase domain (RT) stretch occupies residues 347-690 (DDWGPCAEHG…YLNLYPVARQ (344 aa)). Positions 357 to 600 (EHRIRTPRTP…YSLNFMGYVI (244 aa)) constitute a Reverse transcriptase domain. Residues Asp-429, Asp-551, and Asp-552 each contribute to the Mg(2+) site.

This sequence belongs to the hepadnaviridae P protein family.

The catalysed reaction is DNA(n) + a 2'-deoxyribonucleoside 5'-triphosphate = DNA(n+1) + diphosphate. The enzyme catalyses Endonucleolytic cleavage to 5'-phosphomonoester.. With respect to regulation, activated by host HSP70 and HSP40 in vitro to be able to bind the epsilon loop of the pgRNA. Because deletion of the RNase H region renders the protein partly chaperone-independent, the chaperones may be needed indirectly to relieve occlusion of the RNA-binding site by this domain. Inhibited by several reverse-transcriptase inhibitors: Lamivudine, Adefovir and Entecavir. Multifunctional enzyme that converts the viral RNA genome into dsDNA in viral cytoplasmic capsids. This enzyme displays a DNA polymerase activity that can copy either DNA or RNA templates, and a ribonuclease H (RNase H) activity that cleaves the RNA strand of RNA-DNA heteroduplexes in a partially processive 3'- to 5'-endonucleasic mode. Neo-synthesized pregenomic RNA (pgRNA) are encapsidated together with the P protein, and reverse-transcribed inside the nucleocapsid. Initiation of reverse-transcription occurs first by binding the epsilon loop on the pgRNA genome, and is initiated by protein priming, thereby the 5'-end of (-)DNA is covalently linked to P protein. Partial (+)DNA is synthesized from the (-)DNA template and generates the relaxed circular DNA (RC-DNA) genome. After budding and infection, the RC-DNA migrates in the nucleus, and is converted into a plasmid-like covalently closed circular DNA (cccDNA). The activity of P protein does not seem to be necessary for cccDNA generation, and is presumably released from (+)DNA by host nuclear DNA repair machinery. This chain is Protein P, found in Hepatitis B virus genotype B1 (isolate Japan/Ry30/2002) (HBV-B).